A 596-amino-acid chain; its full sequence is Actin-histidine N-methyltransferase (596 aa).

S-adenosyl-L-methionine-binding positions include Arg-75, 104–106 (EGY), Arg-254, 275–279 (DMCNH), and 325–327 (NGF). The region spanning 94-314 (DGFEISNFAD…EGEQIYIFYG (221 aa)) is the SET domain. The tract at residues 556 to 596 (QCKDLNGTQEDPPGGGAVVKEIEKHDPSAKRTEGEPKDAGK) is disordered. Residues 575-596 (KEIEKHDPSAKRTEGEPKDAGK) show a composition bias toward basic and acidic residues.

This sequence belongs to the class V-like SAM-binding methyltransferase superfamily. SETD3 actin-histidine methyltransferase family.

It localises to the cytoplasm. The enzyme catalyses L-histidyl-[protein] + S-adenosyl-L-methionine = N(tele)-methyl-L-histidyl-[protein] + S-adenosyl-L-homocysteine + H(+). Functionally, protein-histidine N-methyltransferase that specifically mediates 3-methylhistidine (tele-methylhistidine) methylation of actin at 'His-73'. Does not have protein-lysine N-methyltransferase activity and probably only catalyzes histidine methylation of actin. The sequence is that of Actin-histidine N-methyltransferase from Danio rerio (Zebrafish).